The following is a 486-amino-acid chain: Membrane-bound lytic murein transglycosylase F (486 aa).

The N-terminal stretch at 1–28 (MFAHTLFRKRCAIWLLAIGIFLMLGSCA) is a signal peptide. The segment at 29–267 (EKPSELERIK…RLRERYYGHV (239 aa)) is non-LT domain. Positions 268–486 (DVLGYVGAYA…TDLMEELPPL (219 aa)) are LT domain. E314 is an active-site residue.

It in the N-terminal section; belongs to the bacterial solute-binding protein 3 family. The protein in the C-terminal section; belongs to the transglycosylase Slt family.

Its subcellular location is the cell outer membrane. It catalyses the reaction Exolytic cleavage of the (1-&gt;4)-beta-glycosidic linkage between N-acetylmuramic acid (MurNAc) and N-acetylglucosamine (GlcNAc) residues in peptidoglycan, from either the reducing or the non-reducing ends of the peptidoglycan chains, with concomitant formation of a 1,6-anhydrobond in the MurNAc residue.. Functionally, murein-degrading enzyme that degrades murein glycan strands and insoluble, high-molecular weight murein sacculi, with the concomitant formation of a 1,6-anhydromuramoyl product. Lytic transglycosylases (LTs) play an integral role in the metabolism of the peptidoglycan (PG) sacculus. Their lytic action creates space within the PG sacculus to allow for its expansion as well as for the insertion of various structures such as secretion systems and flagella. This is Membrane-bound lytic murein transglycosylase F from Stutzerimonas stutzeri (strain A1501) (Pseudomonas stutzeri).